A 305-amino-acid chain; its full sequence is Aspartate carbamoyltransferase catalytic subunit (305 aa).

Residues Arg54 and Thr55 each coordinate carbamoyl phosphate. Lys83 contributes to the L-aspartate binding site. 3 residues coordinate carbamoyl phosphate: Arg104, His132, and Gln135. 2 residues coordinate L-aspartate: Arg165 and Arg226. Residues Leu265 and Pro266 each contribute to the carbamoyl phosphate site.

It belongs to the aspartate/ornithine carbamoyltransferase superfamily. ATCase family. Heterooligomer of catalytic and regulatory chains.

The catalysed reaction is carbamoyl phosphate + L-aspartate = N-carbamoyl-L-aspartate + phosphate + H(+). It functions in the pathway pyrimidine metabolism; UMP biosynthesis via de novo pathway; (S)-dihydroorotate from bicarbonate: step 2/3. Its function is as follows. Catalyzes the condensation of carbamoyl phosphate and aspartate to form carbamoyl aspartate and inorganic phosphate, the committed step in the de novo pyrimidine nucleotide biosynthesis pathway. This is Aspartate carbamoyltransferase catalytic subunit from Pyrobaculum calidifontis (strain DSM 21063 / JCM 11548 / VA1).